Consider the following 288-residue polypeptide: CBY1-interacting BAR domain-containing protein 1 (288 aa).

The N-terminal 47 residues, 1 to 47 (MLRRSLENRDAQTRQLQDAVTNVEKHFGELCQIFAAYVRKTARLRDK), are a transit peptide targeting the mitochondrion. The segment at 10–220 (DAQTRQLQDA…KIDEEEDLEV (211 aa)) is BAR-like. Residues 107 to 176 (KMKRDDLKAT…ETIDNFEKQK (70 aa)) adopt a coiled-coil conformation. The interval 266 to 288 (RKDHQTEDDDEEDEDLDVTEEEN) is disordered. Residues 271–288 (TEDDDEEDEDLDVTEEEN) show a composition bias toward acidic residues.

This sequence belongs to the CIBAR family. As to quaternary structure, homodimer (via BAR-like domain). Heterodimer with FAM92B (via BAR-like domains). Interacts (via BAR-like domain) with CBY1; this interaction is required for targeting FAM92A to centriole and cilium basal body. Interacts (via BAR-like domain) with CBY3; both proteins form a ninefold symmetric structure at the flagellar base; are recruited to the annulus in a mutually dependent manner and regulate annulus positionning.

It localises to the cytoplasm. Its subcellular location is the cytoskeleton. It is found in the microtubule organizing center. The protein localises to the centrosome. The protein resides in the centriole. It localises to the cilium basal body. Its subcellular location is the cell projection. It is found in the cilium. The protein localises to the nucleus. The protein resides in the mitochondrion inner membrane. It localises to the flagellum. Plays a critical role in regulating mitochondrial ultrastructure and function by maintaining the integrity of mitochondrial morphology, particularly the organization of cristae. Preferentially binds to negatively charged phospholipids like cardiolipin and phosphatidylinositol 4,5-bisphosphate enhancing its interaction with mitochondrial membranes. Induces membrane curvature and tubulation, which are critical for maintaining mitochondrial ultrastructure and the organization of cristae. Plays a crucial role in ciliogenesis. May play a role in limb development through its role in ciliogenesis. Plays a key role in the correct positioning of the annulus, a septin-based ring structure in the sperm flagellum, serving both as a physical barrier and a membrane diffusion barrier that separates the midpiece (MP) from the principal piece (PP). This positioning is essential for proper sperm motility and function. Interacts with CBY3 to form a complex which localizes to the curved membrane region of the flagellar pocket. By doing so, may provide stability and rigidity to the periannular membrane to prevent membrane deformation. This function is crucial for halting annulus migration at the proximal end of the fibrous sheath-containing PP. In Bos taurus (Bovine), this protein is CBY1-interacting BAR domain-containing protein 1.